Here is a 132-residue protein sequence, read N- to C-terminus: Dormancy-associated protein 1 (132 aa).

The disordered stretch occupies residues 53-76 (MPAAVSPGTPTTPTTPTTPRKDNV). The segment covering 61 to 70 (TPTTPTTPTT) has biased composition (low complexity). Thr-64 bears the Phosphothreonine mark.

This sequence belongs to the DRM1/ARP family. As to expression, isoform 1: Expressed mainly in the low bolt. Isoform 2: Expressed mainly in the low bolt. Detected in flowers. Isoform 4: Expressed mainly in the low bolt. Isoform 5: Expressed mainly in the 6 days old seedlings. Detected in 16 days old seedlings, axil, low bolt and floral samples, but only barely in leaves and top bolt.

The chain is Dormancy-associated protein 1 from Arabidopsis thaliana (Mouse-ear cress).